The sequence spans 299 residues: GTP cyclohydrolase FolE2 (299 aa).

The interval 1–25 (MKTKQWPSKTERHKRFGSVPPVAGK) is disordered.

The protein belongs to the GTP cyclohydrolase IV family.

The enzyme catalyses GTP + H2O = 7,8-dihydroneopterin 3'-triphosphate + formate + H(+). It functions in the pathway cofactor biosynthesis; 7,8-dihydroneopterin triphosphate biosynthesis; 7,8-dihydroneopterin triphosphate from GTP: step 1/1. Converts GTP to 7,8-dihydroneopterin triphosphate. This chain is GTP cyclohydrolase FolE2, found in Halalkalibacterium halodurans (strain ATCC BAA-125 / DSM 18197 / FERM 7344 / JCM 9153 / C-125) (Bacillus halodurans).